A 442-amino-acid chain; its full sequence is ATP-dependent protease ATPase subunit HslU (442 aa).

ATP-binding positions include I18, 60-65, D255, E320, and R392; that span reads GVGKTE.

The protein belongs to the ClpX chaperone family. HslU subfamily. As to quaternary structure, a double ring-shaped homohexamer of HslV is capped on each side by a ring-shaped HslU homohexamer. The assembly of the HslU/HslV complex is dependent on binding of ATP.

Its subcellular location is the cytoplasm. Its function is as follows. ATPase subunit of a proteasome-like degradation complex; this subunit has chaperone activity. The binding of ATP and its subsequent hydrolysis by HslU are essential for unfolding of protein substrates subsequently hydrolyzed by HslV. HslU recognizes the N-terminal part of its protein substrates and unfolds these before they are guided to HslV for hydrolysis. This Shewanella putrefaciens (strain CN-32 / ATCC BAA-453) protein is ATP-dependent protease ATPase subunit HslU.